Here is a 545-residue protein sequence, read N- to C-terminus: GMP synthase [glutamine-hydrolyzing] (545 aa).

Residues 17–211 (TVLVLDMGSQ…ATKICGARPD (195 aa)) form the Glutamine amidotransferase type-1 domain. Cys93 (nucleophile) is an active-site residue. Catalysis depends on residues His185 and Glu187. A GMPS ATP-PPase domain is found at 212 to 420 (WKMDDFSARE…LGIHEELIGR (209 aa)). 240–246 (SGGVDST) contributes to the ATP binding site. Arg313, Asp482, Lys537, and Glu543 together coordinate XMP.

In terms of assembly, homodimer. The cofactor is Mg(2+).

The protein resides in the cytoplasm. It is found in the cytosol. The enzyme catalyses XMP + L-glutamine + ATP + H2O = GMP + L-glutamate + AMP + diphosphate + 2 H(+). It participates in purine metabolism; GMP biosynthesis; GMP from XMP (L-Gln route): step 1/1. Its function is as follows. Catalyzes the conversion of xanthine monophosphate (XMP) to GMP in the presence of glutamine and ATP through an adenyl-XMP intermediate. The protein is GMP synthase [glutamine-hydrolyzing] (GUA1) of Gibberella zeae (strain ATCC MYA-4620 / CBS 123657 / FGSC 9075 / NRRL 31084 / PH-1) (Wheat head blight fungus).